The primary structure comprises 88 residues: Putative sulfur carrier protein AF_0552 (88 aa).

The protein belongs to the sulfur carrier protein CysO family.

The polypeptide is Putative sulfur carrier protein AF_0552 (Archaeoglobus fulgidus (strain ATCC 49558 / DSM 4304 / JCM 9628 / NBRC 100126 / VC-16)).